The following is a 496-amino-acid chain: Ribose import ATP-binding protein RbsA (496 aa).

ABC transporter domains are found at residues Ile-3–Glu-239 and Glu-246–Asn-493. Position 35–42 (Gly-35–Ser-42) interacts with ATP.

It belongs to the ABC transporter superfamily. Ribose importer (TC 3.A.1.2.1) family. As to quaternary structure, the complex is composed of an ATP-binding protein (RbsA), two transmembrane proteins (RbsC) and a solute-binding protein (RbsB).

The protein resides in the cell membrane. It catalyses the reaction D-ribose(out) + ATP + H2O = D-ribose(in) + ADP + phosphate + H(+). In terms of biological role, part of the ABC transporter complex RbsABC involved in ribose import. Responsible for energy coupling to the transport system. The polypeptide is Ribose import ATP-binding protein RbsA (Oceanobacillus iheyensis (strain DSM 14371 / CIP 107618 / JCM 11309 / KCTC 3954 / HTE831)).